Reading from the N-terminus, the 413-residue chain is Peptidase T (413 aa).

A Zn(2+)-binding site is contributed by His-84. Asp-86 is a catalytic residue. Asp-146 contributes to the Zn(2+) binding site. Glu-180 serves as the catalytic Proton acceptor. Positions 181, 203, and 385 each coordinate Zn(2+).

Belongs to the peptidase M20B family. Zn(2+) is required as a cofactor.

It is found in the cytoplasm. The enzyme catalyses Release of the N-terminal residue from a tripeptide.. Its function is as follows. Cleaves the N-terminal amino acid of tripeptides. This chain is Peptidase T, found in Limosilactobacillus fermentum (strain NBRC 3956 / LMG 18251) (Lactobacillus fermentum).